The sequence spans 234 residues: MGQKIHPYGFRLGVTKNWRSRWVAPFEKYPEYIVQDEKIRTLINKHYGHAGISSVEIERLGNKMRVIIWTARPGMIIGKQGAEIERLREEIVKLLKNDYEVRIAIYEVKNPETDAQIVSDSIARQIERRVSYKRAMKQAISRAMRSGAQGIKIAVSGRLGGAEIARREWFVQGKLPLSTLKSDVDYGYSIAVTKYGTIGVKCWIYKGDVEDLQELLPPRGLERAERRPERHANA.

The KH type-2 domain maps to 39–109; that stretch reads IRTLINKHYG…EVRIAIYEVK (71 aa).

It belongs to the universal ribosomal protein uS3 family. Part of the 30S ribosomal subunit. Forms a tight complex with proteins S10 and S14.

Functionally, binds the lower part of the 30S subunit head. Binds mRNA in the 70S ribosome, positioning it for translation. The polypeptide is Small ribosomal subunit protein uS3 (Coprothermobacter proteolyticus (strain ATCC 35245 / DSM 5265 / OCM 4 / BT)).